The sequence spans 489 residues: MALFIFLGIWLSCLVFLFLWNQHHVRRKLPPGPTPLPIFGNILQVGVKNISKSMCMLAKEYGPVFTMYLGMKPTVVLYGYEVLKEALIDRGEEFSDKMHSSMLSKVSQGLGIVFSNGEIWKQTRRFSLMVLRSMGMGKRTIENRIQEEVVYLLEALRKTNGSPCDPSFLLACVPCNVISSVIFQHRFDYSDEKFQKFIENFHTKIEILASPWAQLCSAYPVLYYLPGIHNKFLKDVTEQKKFILMEINRHRASLNLSNPQDFIDYFLIKMEKEKHNEKSEFTMDNLIVTIGDLFGAGTETTSSTIKYGLLLLLKYPEVTAKIQEEITRVIGRHRRPCMQDRNHMPYTDAVLHEIQRYIDFVPIPLPRKTTQDVEFRGYHIPKGTSVMACLTSALHDDKEFPNPEKFDPGHFLDEKGNFKKSDYFMAFSAGRRACIGEGLARMEMFLILTSILQHFTLKPLVNPEDIDTTPVQPGLLSVPPPFELCFIPV.

An N-terminal signal peptide occupies residues 1 to 27; it reads MALFIFLGIWLSCLVFLFLWNQHHVRR. Cysteine 434 lines the heme pocket.

The protein belongs to the cytochrome P450 family. Requires heme as cofactor.

It is found in the endoplasmic reticulum membrane. The protein resides in the microsome membrane. It carries out the reaction chenodeoxycholate + reduced [NADPH--hemoprotein reductase] + O2 = alpha-muricholate + oxidized [NADPH--hemoprotein reductase] + H2O + H(+). It catalyses the reaction ursodeoxycholate + reduced [NADPH--hemoprotein reductase] + O2 = beta-muricholate + oxidized [NADPH--hemoprotein reductase] + H2O + H(+). A cytochrome P450 monooxygenase involved in muricholic acid (MCA) synthesis. Hydroxylates at the 6-beta position two major bile acids, chenodeoxycholic acid (CDCA) and ursodeoxycholic acid (UDCA) to form alpha-MCA and beta-MCA, respectively. May regulate NR1H4/farnesoid X receptor signaling, as taurine-conjugated MCAs are antagonists of NR1H4. Mechanistically, uses molecular oxygen inserting one oxygen atom into a substrate, and reducing the second into a water molecule, with two electrons provided by NADPH via cytochrome P450 reductase (CPR; NADPH-ferrihemoprotein reductase). This is Cytochrome P450 2C70 from Rattus norvegicus (Rat).